Consider the following 27-residue polypeptide: Vasotocin-neurophysin VT (27 aa).

Cys-1 and Cys-6 are oxidised to a cystine. Gly-9 carries the post-translational modification Glycine amide.

The protein belongs to the vasopressin/oxytocin family.

Vasotocin is an antidiuretic hormone. This chain is Vasotocin-neurophysin VT, found in Sclerophrys regularis (Common African toad).